The primary structure comprises 183 residues: Dual-action ribosomal maturation protein DarP (183 aa).

The tract at residues 1–23 (MTKQPDDWLDEVPDNENDDDDDE) is disordered. The span at 7 to 23 (DWLDEVPDNENDDDDDE) shows a compositional bias: acidic residues.

This sequence belongs to the DarP family.

Its subcellular location is the cytoplasm. Functionally, member of a network of 50S ribosomal subunit biogenesis factors which assembles along the 30S-50S interface, preventing incorrect 23S rRNA structures from forming. Promotes peptidyl transferase center (PTC) maturation. The chain is Dual-action ribosomal maturation protein DarP from Cronobacter sakazakii (strain ATCC BAA-894) (Enterobacter sakazakii).